The sequence spans 61 residues: Metallothionein-1F (61 aa).

Met-1 is modified (N-acetylmethionine). A beta region spans residues 1–29; that stretch reads MDPNCSCPTGGSCTCAGSCTCKACRCTSC. Cys-5, Cys-7, Cys-13, Cys-15, Cys-19, Cys-21, Cys-24, Cys-26, Cys-29, Cys-33, Cys-34, Cys-36, Cys-37, Cys-41, Cys-44, Cys-48, Cys-50, and Cys-57 together coordinate a divalent metal cation. Residues 30 to 61 form an alpha region; the sequence is KKSCCSCCPAGCAKCAQGCICKGASDKCSCCA. Ser-58 is modified (phosphoserine). A divalent metal cation contacts are provided by Cys-59 and Cys-60.

The protein belongs to the metallothionein superfamily. Type 1 family. As to quaternary structure, monomer.

In terms of biological role, metallothioneins have a high content of cysteine residues that bind various heavy metals; these proteins are transcriptionally regulated by both heavy metals and glucocorticoids. This chain is Metallothionein-1F (MT1F), found in Sus scrofa (Pig).